We begin with the raw amino-acid sequence, 119 residues long: Large ribosomal subunit protein bL20 (119 aa).

This sequence belongs to the bacterial ribosomal protein bL20 family.

Functionally, binds directly to 23S ribosomal RNA and is necessary for the in vitro assembly process of the 50S ribosomal subunit. It is not involved in the protein synthesizing functions of that subunit. This Teredinibacter turnerae (strain ATCC 39867 / T7901) protein is Large ribosomal subunit protein bL20.